Here is a 218-residue protein sequence, read N- to C-terminus: Probable transaldolase 2 (218 aa).

Lysine 83 functions as the Schiff-base intermediate with substrate in the catalytic mechanism.

Belongs to the transaldolase family. Type 3B subfamily.

Its subcellular location is the cytoplasm. It catalyses the reaction D-sedoheptulose 7-phosphate + D-glyceraldehyde 3-phosphate = D-erythrose 4-phosphate + beta-D-fructose 6-phosphate. Its pathway is carbohydrate degradation; pentose phosphate pathway; D-glyceraldehyde 3-phosphate and beta-D-fructose 6-phosphate from D-ribose 5-phosphate and D-xylulose 5-phosphate (non-oxidative stage): step 2/3. Transaldolase is important for the balance of metabolites in the pentose-phosphate pathway. The protein is Probable transaldolase 2 of Listeria innocua serovar 6a (strain ATCC BAA-680 / CLIP 11262).